The sequence spans 364 residues: mRNA decay activator protein ZFP36L2-B (364 aa).

Residues 102–111 (SFSENGERSQ) are compositionally biased toward basic and acidic residues. Residues 102-129 (SFSENGERSQHLLHLQQQQQQQKAGAQV) are disordered. Residues 113–123 (LLHLQQQQQQQ) are compositionally biased toward low complexity. Positions 133 to 138 (RYKTEL) match the RNA-binding motif. 2 consecutive C3H1-type zinc fingers follow at residues 133–161 (RYKTELCRPFEENGACKYGEKCQFAHGFH) and 171–199 (KYKTELCRTFHTIGFCPYGPRCHFIHNAE). Residues 150–191 (YGEKCQFAHGFHELRSLTRHPKYKTELCRTFHTIGFCPYGPR) form an RNA-binding region. Residues 308-350 (SESPVFDAPPSPPDSLSDRDSYLSGSLSSGSLSGSDSPTLDSN) are disordered. Positions 329–348 (YLSGSLSSGSLSGSDSPTLD) are enriched in low complexity.

Phosphorylated. As to expression, remains unlocalized in the egg and early embryo. From stage 21 (late neurula), expressed around the pronephros in the anterior crests, pharyngeal arch, hindbrain, mesodermal tissues around the pronephros and tail-bud. This expression pattern is maintained up to the tadpole stage.

Its subcellular location is the nucleus. It is found in the cytoplasm. Functionally, zinc-finger RNA-binding protein that destabilizes several cytoplasmic AU-rich element (ARE)-containing mRNA transcripts by promoting their poly(A) tail removal or deadenylation, and hence provide a mechanism for attenuating protein synthesis. Acts as a 3'-untranslated region (UTR) ARE mRNA-binding adapter protein to communicate signaling events to the mRNA decay machinery. Functions by recruiting the CCR4-NOT deadenylase complex and probably other components of the cytoplasmic RNA decay machinery to the bound ARE-containing mRNAs, and hence promotes ARE-mediated mRNA deadenylation and decay processes. Binds to 3'-UTR ARE of numerous mRNAs. Also induces the degradation of ARE-containing mRNAs even in absence of poly(A) tail. Required for tubulogenesis during pronephros development. This is mRNA decay activator protein ZFP36L2-B (zfp36l2-B) from Xenopus laevis (African clawed frog).